Here is a 342-residue protein sequence, read N- to C-terminus: L-threonine 3-dehydrogenase (342 aa).

Residue cysteine 39 participates in Zn(2+) binding. Residues threonine 41 and histidine 44 each act as charge relay system in the active site. Residues histidine 64, glutamate 65, cysteine 94, cysteine 97, cysteine 100, and cysteine 108 each contribute to the Zn(2+) site. Residues isoleucine 176, aspartate 196, arginine 201, 263–265 (LGI), and 287–288 (IY) contribute to the NAD(+) site.

It belongs to the zinc-containing alcohol dehydrogenase family. Homotetramer. Zn(2+) is required as a cofactor.

It localises to the cytoplasm. It catalyses the reaction L-threonine + NAD(+) = (2S)-2-amino-3-oxobutanoate + NADH + H(+). Its pathway is amino-acid degradation; L-threonine degradation via oxydo-reductase pathway; glycine from L-threonine: step 1/2. In terms of biological role, catalyzes the NAD(+)-dependent oxidation of L-threonine to 2-amino-3-ketobutyrate. In Protochlamydia amoebophila (strain UWE25), this protein is L-threonine 3-dehydrogenase.